The chain runs to 249 residues: MNKKNQWIVGINAVVSSIENDAEHVREVLVEAASKNSRLLDIEENARRKGIEVRRVTTQALDGVGGGVRHQGVAARYAAVRLWEEHDLKDLVDAAGGQALLLVLDGVQDPHNLGACLRSAAAAGVTAVIIPKDKSVGINATVRKTSSGAADRLPVIAVVNLARSLRELQKQDVWIYGLAGEVETSLYALDLRGNVALVLGGEADGLRRLTREHCDVLARIPMPGEVESLNVSVAAGVTLFEAVRQRTLV.

Residues Gly200, Ile220, and Leu229 each coordinate S-adenosyl-L-methionine.

Belongs to the class IV-like SAM-binding methyltransferase superfamily. RNA methyltransferase TrmH family. RlmB subfamily.

Its subcellular location is the cytoplasm. The catalysed reaction is guanosine(2251) in 23S rRNA + S-adenosyl-L-methionine = 2'-O-methylguanosine(2251) in 23S rRNA + S-adenosyl-L-homocysteine + H(+). Functionally, specifically methylates the ribose of guanosine 2251 in 23S rRNA. The polypeptide is 23S rRNA (guanosine-2'-O-)-methyltransferase RlmB (Xylella fastidiosa (strain Temecula1 / ATCC 700964)).